The chain runs to 405 residues: MNIAKPNSYRSGPDERGHFGIFGGRFVAETLMPLILDLEKAYTAAKADPAFQAEMNGYLKNYVGRPSPLYFAERLTEHLGGAKIYLKREELNHTGSHKVNNVLGQIMLARRMGKKRIIAETGAGQHGVATATLCARFGLECVVYMGAVDVERQQPNVIRMEMLGAKVVPVQSGTRTLKDAMNEALRDWVTNVHNTFYCIGTVAGPHPYPTLVRDFQSIIGNETKAQMQEVEGRLPDSLVACIGGGSNAMGLFHPFLDDPSVEIFGVEAAGHGLTQLHAASIAGGRPGVLHGNRTYLLMDADGQIQDAHSISAGLDYPGIGPEHSWLHEIGRVNYLSATDDEALAAFQLLSKLEGIIPALEPAHAIAKVMELAPKRAKDHLMVVNLSGRGDKDVPQVGDILRGKSK.

The residue at position 98 (K98) is an N6-(pyridoxal phosphate)lysine.

The protein belongs to the TrpB family. In terms of assembly, tetramer of two alpha and two beta chains. Pyridoxal 5'-phosphate is required as a cofactor.

It carries out the reaction (1S,2R)-1-C-(indol-3-yl)glycerol 3-phosphate + L-serine = D-glyceraldehyde 3-phosphate + L-tryptophan + H2O. It participates in amino-acid biosynthesis; L-tryptophan biosynthesis; L-tryptophan from chorismate: step 5/5. In terms of biological role, the beta subunit is responsible for the synthesis of L-tryptophan from indole and L-serine. The polypeptide is Tryptophan synthase beta chain (Bradyrhizobium diazoefficiens (strain JCM 10833 / BCRC 13528 / IAM 13628 / NBRC 14792 / USDA 110)).